The primary structure comprises 526 residues: Cytochrome P450 monooxygenase BOT4 (526 aa).

Asparagine 5 carries N-linked (GlcNAc...) asparagine glycosylation. The chain crosses the membrane as a helical span at residues 41-61 (CLVAIILCRFIAVWSYNLWFH). Asparagine 205 and asparagine 281 each carry an N-linked (GlcNAc...) asparagine glycan. Cysteine 464 is a heme binding site.

The protein belongs to the cytochrome P450 family. Heme is required as a cofactor.

The protein resides in the membrane. It participates in secondary metabolite biosynthesis. Its function is as follows. Cytochrome P450 monooxygenase; part of the gene cluster that mediates the biosynthesis of botrydial. Botrydial is necessary for colonization of plant tissue by the T4 strain. It is a strain-dependent virulence factor since highly aggressive strains like SAS56 or B05 still retain substantial virulence when botrydial synthesis is impaired, since they produce also botcinic acid. The first step of botrydial biosynthesis is performed by the sesquiterpene synthase BOT2 which catalyzes the cyclization of farnesyl diphosphate (FPP) to presilphiperfolan-8-beta-ol (PSP). The cytochrome P450 monooxygenase BOT4 then catalyzes the hydroxylation at C-4 to give a probotryane intermediate. Acetylation of the hydroxyl at C-4 is carried out by the acetyltransferase BOT5, followed by the combined action of the P450 monooxygenases BOT3 and BOT1, to yield finally the glycol, via the regio- and stereospecific hydroxylations at C-10 and C-15 of the probotryane intermediates, respectively. The cleavage of the C10-C15 bond of probotryane skeleton is an intriguing and chemically important reaction, which could be mediated by some of the monooxygenases or by a combination of them. It is possible that either BOT3 or BOT1 would oxidize either the 10- or the 15-hydroxy group to the hydroperoxide derivative, which would then undergo heterolytic fragmentation to give the dialdehyde botrydial. Finally, the dehydrogenase BOT7 might be involved in the conversion of botrydial to dihydrobotrydial. In Botryotinia fuckeliana (Noble rot fungus), this protein is Cytochrome P450 monooxygenase BOT4.